Reading from the N-terminus, the 699-residue chain is PTS system glucose-specific EIICBA component (699 aa).

The region spanning 3–424 (KALFGVLQKI…FNLKTPGRED (422 aa)) is the PTS EIIC type-1 domain. 11 consecutive transmembrane segments (helical) span residues 16 to 36 (LMLP…GNAM), 66 to 86 (IVFD…LANG), 89 to 109 (VAGI…SAVL), 139 to 159 (IPTL…AALL), 180 to 200 (FVPI…LVIW), 233 to 253 (LIPF…FFSY), 283 to 303 (FMTG…LAIY), 313 to 333 (LVAG…ITEP), 338 to 358 (FLFV…LSFM), 365 to 385 (VKIG…GILP), and 388 to 408 (TAWW…YFGF). A PTS EIIB type-1 domain is found at 439 to 520 (GDLPYEILQA…QDIIAGRKPR (82 aa)). Cysteine 461 (phosphocysteine intermediate; for EIIB activity) is an active-site residue. Residues 568 to 672 (DQVFSGKMMG…SLMTPIVFTN (105 aa)) form the PTS EIIA type-1 domain. The Tele-phosphohistidine intermediate; for EIIA activity role is filled by histidine 620.

It localises to the cell membrane. It catalyses the reaction N(pros)-phospho-L-histidyl-[protein] + D-glucose(out) = D-glucose 6-phosphate(in) + L-histidyl-[protein]. The enzyme catalyses D-glucosamine(out) + N(pros)-phospho-L-histidyl-[protein] = D-glucosamine 6-phosphate(in) + L-histidyl-[protein]. Its function is as follows. The phosphoenolpyruvate-dependent sugar phosphotransferase system (sugar PTS), a major carbohydrate active transport system, catalyzes the phosphorylation of incoming sugar substrates concomitantly with their translocation across the cell membrane. This system is involved in glucose transport. The system can also transport glucosamine. Functionally, in addition, plays an important role in the phosphorylation of EIIA-deficient PTS transporters. The EIIA domain can transfer a phosphoryl group to EIIA-deficient PTS transporters, enabling growth with maltose, N-acetylglucosamine, sucrose or trehalose as the sole carbon source. This Bacillus subtilis (strain 168) protein is PTS system glucose-specific EIICBA component (ptsG).